A 239-amino-acid chain; its full sequence is Flagellar L-ring protein (239 aa).

The first 16 residues, 1–16, serve as a signal peptide directing secretion; it reads MKPVILATASALLLAA. A lipid anchor (N-palmitoyl cysteine) is attached at cysteine 17. Cysteine 17 carries the S-diacylglycerol cysteine lipid modification. Positions 120 to 138 are enriched in polar residues; the sequence is SGSTSGSASGNLGLTGDTS. Residues 120–145 are disordered; sequence SGSTSGSASGNLGLTGDTSTDGKGKI.

Belongs to the FlgH family. In terms of assembly, the basal body constitutes a major portion of the flagellar organelle and consists of four rings (L,P,S, and M) mounted on a central rod.

Its subcellular location is the cell outer membrane. The protein localises to the bacterial flagellum basal body. Assembles around the rod to form the L-ring and probably protects the motor/basal body from shearing forces during rotation. The polypeptide is Flagellar L-ring protein (Azorhizobium caulinodans (strain ATCC 43989 / DSM 5975 / JCM 20966 / LMG 6465 / NBRC 14845 / NCIMB 13405 / ORS 571)).